Here is a 158-residue protein sequence, read N- to C-terminus: Snaclec jerdonuxin subunit alpha (158 aa).

The first 23 residues, M1 to A23, serve as a signal peptide directing secretion. Disulfide bonds link C27-C38, C55-C152, and C127-C144. Residues Y34–K153 enclose the C-type lectin domain.

It belongs to the snaclec family. As to quaternary structure, tetramer of 4 heterodimers of alpha and beta subunits; disulfide-linked. As to expression, expressed by the venom gland.

It localises to the secreted. Functionally, snaclec that strongly induces platelet aggregation, in a dose-dependent manner. The protein is Snaclec jerdonuxin subunit alpha of Protobothrops jerdonii (Jerdon's pitviper).